A 276-amino-acid chain; its full sequence is MLKRRLLLLWALSLLASLVYSAPRPANQRVGIVGGHEASESKWPWQVSLRFKLNYWIHFCGGSLIHPQWVLTAAHCVGPHIKSPQLFRVQLREQYLYYGDQLLSLNRIVVHPHYYTAEGGADVALLELEVPVNVSTHIHPISLPPASETFPPGTSCWVTGWGDIDNDEPLPPPYPLKQVKVPIVENSLCDRKYHTGLYTGDDFPIVHDGMLCAGNTRRDSCQGDSGGPLVCKVKGTWLQAGVVSWGEGCAQPNKPGIYTRVTYYLDWIHRYVPEHS.

A signal peptide spans 1–21 (MLKRRLLLLWALSLLASLVYS). A propeptide spans 22-31 (APRPANQRVG) (activation peptide). Residues 32–273 (IVGGHEASES…YLDWIHRYVP (242 aa)) enclose the Peptidase S1 domain. A disulfide bond links C60 and C76. Residue H75 is the Charge relay system of the active site. Y98 carries the post-translational modification Phosphotyrosine. Residue D122 is the Charge relay system of the active site. The N-linked (GlcNAc...) asparagine glycan is linked to N133. 3 cysteine pairs are disulfide-bonded: C156/C231, C189/C212, and C221/C249. Residue S225 is the Charge relay system of the active site.

This sequence belongs to the peptidase S1 family. Tryptase subfamily. Homotetramer. The active tetramer is converted to inactive monomers at neutral and acidic pH in the absence of heparin. Low concentrations of inactive monomers become active monomers at pH 6.0 in the presence of heparin. When the concentration of active monomers is higher, they convert to active monomers and then to active tetramers. These monomers are active and functionally distinct from the tetrameric enzyme. In contrast to the hidden active sites in the tetrameric form, the active site of the monomeric form is accessible for macromolecular proteins and inhibitors, e.g. fibrinogen which is a substrate for the monomeric but not for the tetrameric form. The monomeric form forms a complex with SERPINB6. As to expression, during embryogenesis, detected primarily in skin.

It localises to the secreted. It carries out the reaction Preferential cleavage: Arg-|-Xaa, Lys-|-Xaa, but with more restricted specificity than trypsin.. In terms of biological role, tryptase is the major neutral protease present in mast cells and is secreted upon the coupled activation-degranulation response of this cell type. Plays a role in innate immunity. This is Tryptase beta-2 (Tpsb2) from Mus musculus (Mouse).